We begin with the raw amino-acid sequence, 971 residues long: Nuclear factor NF-kappa-B p105 subunit (971 aa).

In terms of domain architecture, RHD spans proline 40 to methionine 365. S-nitrosocysteine; alternate is present on cysteine 59. Cysteine 59 carries S-(15-deoxy-Delta12,14-prostaglandin J2-9-yl)cysteine; alternate lipidation. Residue lysine 323 forms a Glycyl lysine isopeptide (Lys-Gly) (interchain with G-Cter in SUMO2) linkage. The residue at position 335 (serine 335) is a Phosphoserine; by PKA. The Nuclear localization signal signature appears at glutamine 358–lysine 363. The segment at aspartate 370–glycine 392 is GRR. The segment at isoleucine 433–isoleucine 971 is interaction with CFLAR. Residue lysine 438 is modified to N6-acetyllysine; by EP300. Positions asparagine 439–alanine 470 are disordered. A Phosphoserine modification is found at serine 447. ANK repeat units follow at residues asparagine 538–serine 567, leucine 577–leucine 606, tryptophan 610–leucine 639, glutamate 646–alanine 675, serine 680–serine 710, and aspartate 714–valine 743. Residues glutamate 646–serine 680 form an essential for interaction with HIF1AN region. Asparagine 674 carries the (3S)-3-hydroxyasparagine; by HIF1AN modification. Position 755 is a phosphoserine (serine 755). Residues proline 767–aspartate 797 form an ANK 7 repeat. Positions glutamine 801 to phenylalanine 888 constitute a Death domain. Position 896 is a phosphoserine (serine 896). Phosphoserine; by GSK3-beta; in vitro is present on serine 910. The residue at position 926 (serine 926) is a Phosphoserine. Phosphoserine; by IKKB occurs at positions 930 and 935. At serine 940 the chain carries Phosphoserine. Residue threonine 946 is modified to Phosphothreonine.

As to quaternary structure, component of the NF-kappa-B p65-p50 complex. Homodimer; component of the NF-kappa-B p50-p50 complex. Component of the NF-kappa-B p105-p50 complex. Component of the NF-kappa-B p50-c-Rel complex. Component of a complex consisting of the NF-kappa-B p50-p50 homodimer and BCL3. Also interacts with MAP3K8. NF-kappa-B p50 subunit interacts with NCOA3 coactivator, which may coactivate NF-kappa-B dependent expression via its histone acetyltransferase activity. Interacts with TSC22D3; this interaction prevents nuclear translocation and DNA-binding. Interacts with SPAG9 and UNC5CL. NFKB1/p105 interacts with CFLAR; the interaction inhibits p105 processing into p50. NFKB1/p105 forms a ternary complex with MAP3K8 and TNIP2. Interacts with GSK3B; the interaction prevents processing of p105 to p50. NFKB1/p50 interacts with NFKBIE. NFKB1/p50 interacts with NFKBIZ. Nuclear factor NF-kappa-B p50 subunit interacts with NFKBID. Directly interacts with MEN1. Interacts with HIF1AN. Interacts with FEM1AA; interaction is direct. Generation of the NF-kappa-B p50 (Nuclear factor NF-kappa-B p50 subunit) transcription factor takes place both cotranslationally and post-translationally via non-mutually exclusive mechanisms. A cotranslational processing allows the production of both p50 and p105 (Nuclear factor NF-kappa-B p105 subunit) from a single NFKB1 mRNA. While translation occurs, the particular unfolded structure after the GRR repeat region acts as a substrate for the proteasome, promoting degradation of the C-terminus. The GRR acts as a proteasomal 'stop signal', protecting the region upstream of the GRR from degradation and promoting generation of p50. It is unclear if limited proteasome degradation during cotranslational processing depends on ubiquitination. NF-kappa-B p50 is also generated post-translationally following ubiquitination by the KPC complex, leading to limited processing by the proteasome downstream of the GRR region, thereby generating p50. In terms of processing, phosphorylation at the C-terminus by IKBKB/IKKB acts as a signal for ubiquitination and promotes either complete degradation or processing to generate the NF-kappa-B p50 (Nuclear factor NF-kappa-B p50 subunit). Phosphorylation at Ser-910 primes p105 for proteolytic processing in response to TNF-alpha stimulation. Phosphorylation at Ser-926, Ser-930 and Ser-935 are required for BTRC/BTRCP-mediated ubiquitination and proteolysis. Phosphorylation at Ser-930 is also required for ubiquitination by the KPC complex and limited processing to generate NF-kappa-B p50 (Nuclear factor NF-kappa-B p50 subunit). Post-translationally, polyubiquitinated at multiple Lys residues in the C-terminus. Polyubiquitinated by the SCF(FBXW11) and SCF(BTRC) complexes following phosphorylation at Ser-926, Ser-930 and Ser-935, leading to its complete degradation. In contrast, polyubiquitination by the KPC complex following phosphorylation at Ser-930 leads to limited proteosomal processing and generation of the active NF-kappa-B p50 (Nuclear factor NF-kappa-B p50 subunit). S-nitrosylation of Cys-59 affects DNA binding. In terms of processing, the covalent modification of cysteine by 15-deoxy-Delta12,14-prostaglandin-J2 is autocatalytic and reversible. It may occur as an alternative to other cysteine modifications, such as S-nitrosylation and S-palmitoylation.

It localises to the cytoplasm. The protein localises to the nucleus. Functionally, NF-kappa-B is a pleiotropic transcription factor present in almost all cell types and is the endpoint of a series of signal transduction events that are initiated by a vast array of stimuli related to many biological processes such as inflammation, immunity, differentiation, cell growth, tumorigenesis and apoptosis. NF-kappa-B is a homo- or heterodimeric complex formed by the Rel-like domain-containing proteins RELA/p65, RELB, NFKB1/p105, NFKB1/p50, REL and NFKB2/p52 and the heterodimeric p65-p50 complex appears to be most abundant one. The dimers bind at kappa-B sites in the DNA of their target genes and the individual dimers have distinct preferences for different kappa-B sites that they can bind with distinguishable affinity and specificity. Different dimer combinations act as transcriptional activators or repressors, respectively. NF-kappa-B is controlled by various mechanisms of post-translational modification and subcellular compartmentalization as well as by interactions with other cofactors or corepressors. NF-kappa-B complexes are held in the cytoplasm in an inactive state complexed with members of the NF-kappa-B inhibitor (I-kappa-B) family. In a conventional activation pathway, I-kappa-B is phosphorylated by I-kappa-B kinases (IKKs) in response to different activators, subsequently degraded thus liberating the active NF-kappa-B complex which translocates to the nucleus. NF-kappa-B heterodimeric p65-p50 and RelB-p50 complexes are transcriptional activators. The NF-kappa-B p50-p50 homodimer is a transcriptional repressor, but can act as a transcriptional activator when associated with BCL3. NFKB1 appears to have dual functions such as cytoplasmic retention of attached NF-kappa-B proteins by p105 and generation of p50 by a cotranslational processing. The proteasome-mediated process ensures the production of both p50 and p105 and preserves their independent function, although processing of NFKB1/p105 also appears to occur post-translationally. p50 binds to the kappa-B consensus sequence 5'-GGRNNYYCC-3', located in the enhancer region of genes involved in immune response and acute phase reactions. Plays a role in the regulation of apoptosis. In a complex with MAP3K8, NFKB1/p105 represses MAP3K8-induced MAPK signaling; active MAP3K8 is released by proteasome-dependent degradation of NFKB1/p105. Its function is as follows. P105 is the precursor of the active p50 subunit (Nuclear factor NF-kappa-B p50 subunit) of the nuclear factor NF-kappa-B. Acts as a cytoplasmic retention of attached NF-kappa-B proteins by p105. In terms of biological role, constitutes the active form, which associates with RELA/p65 to form the NF-kappa-B p65-p50 complex to form a transcription factor. Together with RELA/p65, binds to the kappa-B consensus sequence 5'-GGRNNYYCC-3', located in the enhancer region of genes involved in immune response and acute phase reactions. Isoform 3 (p98) (but not p84 or p105) acts as a transactivator of NF-kappa-B-regulated gene expression. Functionally, acts as an inhibitor of transactivation of p50 NF-kappa-B subunit, probably by sequestering it in the cytoplasm. The protein is Nuclear factor NF-kappa-B p105 subunit (Nfkb1) of Mus musculus (Mouse).